We begin with the raw amino-acid sequence, 470 residues long: Metalloreductase STEAP4 (470 aa).

NADP(+) is bound by residues 27-30, 49-50, Tyr-67, 81-85, Asn-106, and Ala-139; these read TGDF, SR, and MHREH. FAD is bound by residues Trp-140 and Asp-148. Position 171 (Arg-171) interacts with NADP(+). Helical transmembrane passes span 202–224 and 236–256; these read FPFY…REVI and YRLA…ILLA. Fe(3+) is bound at residue Tyr-217. Positions 247-395 constitute a Ferric oxidoreductase domain; the sequence is FPITALILLA…LGYLTLVLCT (149 aa). FAD-binding residues include Gln-269 and Arg-290. A run of 2 helical transmembrane segments spans residues 293–313 and 342–362; these read LGLV…VIPI and AWIN…FLLL. His-304 lines the heme b pocket. Tyr-307 serves as a coordination point for Fe(3+). Residues Ser-366 and Gln-383 each contribute to the FAD site. Helical transmembrane passes span 381 to 401 and 419 to 439; these read FVQS…TLVY and AYIL…ILIM. His-397 contacts heme b.

It belongs to the STEAP family. In terms of assembly, homotrimer. Interacts with PTK2/FAK1; the interaction may regulate PTK2 phosphorylation. FAD is required as a cofactor. It depends on heme b as a cofactor. As to expression, expressed in white and brown adipose tissues cells, as well as in muscle and liver cells. Detected in joints and spleens of arthritic mice.

It localises to the cell membrane. Its subcellular location is the golgi apparatus membrane. The protein resides in the early endosome membrane. It catalyses the reaction 2 Fe(2+) + NADP(+) + H(+) = 2 Fe(3+) + NADPH. It carries out the reaction 2 Cu(+) + NADP(+) + H(+) = 2 Cu(2+) + NADPH. Integral membrane protein that functions as a NADPH-dependent ferric-chelate reductase, using NADPH from one side of the membrane to reduce a Fe(3+) chelate that is bound on the other side of the membrane. Mediates sequential transmembrane electron transfer from NADPH to FAD and onto heme, and finally to the Fe(3+) chelate. Can also reduce Cu(2+) to Cu(1+). Plays a role in systemic metabolic homeostasis, integrating inflammatory and metabolic responses. Associated with obesity and insulin-resistance. Involved in inflammatory arthritis, through the regulation of inflammatory cytokines. Inhibits anchorage-independent cell proliferation. The polypeptide is Metalloreductase STEAP4 (Steap4) (Mus musculus (Mouse)).